A 604-amino-acid chain; its full sequence is Putative O-acetyltransferase SAR0937 (604 aa).

The next 11 membrane-spanning stretches (helical) occupy residues 15-35, 43-63, 85-105, 150-170, 176-196, 212-232, 240-260, 267-287, 310-330, 332-352, and 377-397; these read YMPG…IYHL, GFLG…SLLL, LLPA…LLKS, AIEE…LLTI, IGFI…FIYS, LQTL…KLKN, YVID…FFII, IYDG…ASVV, YSLY…YVDG, IPVY…ELSY, and FIRM…LVGA. Residues Ser-459, Asp-581, and His-584 contribute to the active site.

Belongs to the acyltransferase 3 family.

It localises to the cell membrane. The protein is Putative O-acetyltransferase SAR0937 of Staphylococcus aureus (strain MRSA252).